A 176-amino-acid chain; its full sequence is Inorganic pyrophosphatase (176 aa).

Positions 30, 44, and 56 each coordinate substrate. Positions 66, 71, and 103 each coordinate Mg(2+). Y142 is a binding site for substrate.

This sequence belongs to the PPase family. In terms of assembly, homohexamer. Mg(2+) is required as a cofactor.

The protein resides in the cytoplasm. The enzyme catalyses diphosphate + H2O = 2 phosphate + H(+). Functionally, catalyzes the hydrolysis of inorganic pyrophosphate (PPi) forming two phosphate ions. The chain is Inorganic pyrophosphatase from Aeropyrum pernix (strain ATCC 700893 / DSM 11879 / JCM 9820 / NBRC 100138 / K1).